The chain runs to 426 residues: Serine--tRNA ligase (426 aa).

Position 231–233 (231–233 (TLE)) interacts with L-serine. 262–264 (RSE) contributes to the ATP binding site. Glu285 serves as a coordination point for L-serine. 349 to 352 (EISS) lines the ATP pocket. Ser385 serves as a coordination point for L-serine.

The protein belongs to the class-II aminoacyl-tRNA synthetase family. Type-1 seryl-tRNA synthetase subfamily. As to quaternary structure, homodimer. The tRNA molecule binds across the dimer.

The protein resides in the cytoplasm. The enzyme catalyses tRNA(Ser) + L-serine + ATP = L-seryl-tRNA(Ser) + AMP + diphosphate + H(+). It catalyses the reaction tRNA(Sec) + L-serine + ATP = L-seryl-tRNA(Sec) + AMP + diphosphate + H(+). It functions in the pathway aminoacyl-tRNA biosynthesis; selenocysteinyl-tRNA(Sec) biosynthesis; L-seryl-tRNA(Sec) from L-serine and tRNA(Sec): step 1/1. Its function is as follows. Catalyzes the attachment of serine to tRNA(Ser). Is also able to aminoacylate tRNA(Sec) with serine, to form the misacylated tRNA L-seryl-tRNA(Sec), which will be further converted into selenocysteinyl-tRNA(Sec). The sequence is that of Serine--tRNA ligase from Malacoplasma penetrans (strain HF-2) (Mycoplasma penetrans).